A 349-amino-acid chain; its full sequence is Phosphoribosylformylglycinamidine cyclo-ligase (349 aa).

It belongs to the AIR synthase family.

The protein localises to the cytoplasm. It catalyses the reaction 2-formamido-N(1)-(5-O-phospho-beta-D-ribosyl)acetamidine + ATP = 5-amino-1-(5-phospho-beta-D-ribosyl)imidazole + ADP + phosphate + H(+). The protein operates within purine metabolism; IMP biosynthesis via de novo pathway; 5-amino-1-(5-phospho-D-ribosyl)imidazole from N(2)-formyl-N(1)-(5-phospho-D-ribosyl)glycinamide: step 2/2. This is Phosphoribosylformylglycinamidine cyclo-ligase from Psychrobacter cryohalolentis (strain ATCC BAA-1226 / DSM 17306 / VKM B-2378 / K5).